The chain runs to 244 residues: Lipid A 1-phosphatase (244 aa).

6 helical membrane-spanning segments follow: residues Leu-28–Ala-48, Glu-60–Phe-80, Ala-98–Leu-118, Phe-154–Pro-174, Val-178–Tyr-198, and Asp-201–Ala-221.

Belongs to the lipid A LpxE 1-phosphatase family.

It is found in the cell inner membrane. It participates in bacterial outer membrane biogenesis; LPS lipid A biosynthesis. Removes the 1-phosphate group from (tetraacyl) lipid A species, has no requirement for the Kdo(2) moiety of lipid A. Has no 4'-phosphatase activity. Reduces sensitivity of S.meliloti strain 1021 to the cationic antimicrobial peptide (CAMP) polymyxin B. In Rhizobium johnstonii (strain DSM 114642 / LMG 32736 / 3841) (Rhizobium leguminosarum bv. viciae), this protein is Lipid A 1-phosphatase.